We begin with the raw amino-acid sequence, 425 residues long: Probable proline--tRNA ligase, mitochondrial (425 aa).

Belongs to the class-II aminoacyl-tRNA synthetase family.

The protein localises to the mitochondrion. It catalyses the reaction tRNA(Pro) + L-proline + ATP = L-prolyl-tRNA(Pro) + AMP + diphosphate. This is Probable proline--tRNA ligase, mitochondrial from Schizosaccharomyces pombe (strain 972 / ATCC 24843) (Fission yeast).